The primary structure comprises 395 residues: MAQVQQLTPAQQAALRNQQAMAANLQARQIVLQQSYPVIQQVETQTFDPANRSVFDVTPANVGIVKGFLVKVTAAITNNHATEAVALTDFGPANLVQRVIYYDPDNQRHTETSGWHLHFVNTAKQGAPFLSSMVTDSPIKYGDVMNVIDAPATIAAGATGELTMYYWVPLAYSETDLTGAVLANVPQSKQRLKLEFANNNTAFAAVGANPLEAIYQGAGAADCEFEEISYTVYQSYLDQLPVGQNGYILPLIDLSTLYNLENSAQAGLTPNVDFVVQYANLYRYLSTIAVFDNGGSFNAGTDINYLSQRTANFSDTRKLDPKTWAAQTRRRIATDFPKGVYYCDNRDKPIYTLQYGNVGFVVNPKTVNQNARLLMGYEYFTSRTELVNAGTISTT.

Homotrimer.

The protein localises to the virion. Functionally, major capsid protein self-assembles to form an icosahedral capsid with a pseudo T=25 symmetry, about 66 nm in diameter, and consisting of 240 capsid proteins trimers. The capsid encapsulates an inner membrane and the genomic dsDNA genome. The major coat protein P3 and two assembly factors (P10 and P17) are needed during the assembly of the virus particle inside the host cell, when the capsid protein multimers are capable of enclosing the host-derived membrane, containing the virus-encoded membrane-associated proteins. This chain is Major capsid protein P3 (III), found in Acinetobacter calcoaceticus (Arthrobacter siderocapsulatus).